A 488-amino-acid chain; its full sequence is Solute carrier family 41 member 3 (488 aa).

Basic and acidic residues-rich tracts occupy residues 1–19 and 27–36; these read MEGT…RLKE and DAGRLPKASE. The disordered stretch occupies residues 1-36; sequence MEGTEARQRRLEGCGRLKELGPLPSHDAGRLPKASE. 9 helical membrane-spanning segments follow: residues 63-83, 147-167, 189-209, 220-240, 251-271, 284-304, 377-397, 406-426, and 450-470; these read LIIG…LSWA, LAVV…ASLM, VITA…IVIG, IATP…LALM, WYLT…WLFI, YGWF…LILS, VLLF…CLVE, IFIL…LYLA, and GLGD…DWLL.

This sequence belongs to the SLC41A transporter family.

The protein resides in the mitochondrion inner membrane. It catalyses the reaction Mg(2+)(in) + 2 Na(+)(out) = Mg(2+)(out) + 2 Na(+)(in). Functionally, na(+)/Mg(2+) ion exchanger that acts as a predominant Mg(2+) efflux system at the mitochondrial inner membrane. The sequence is that of Solute carrier family 41 member 3 (Slc41a3) from Mus musculus (Mouse).